The following is a 100-amino-acid chain: Aspartyl/glutamyl-tRNA(Asn/Gln) amidotransferase subunit C (100 aa).

Belongs to the GatC family. Heterotrimer of A, B and C subunits.

The enzyme catalyses L-glutamyl-tRNA(Gln) + L-glutamine + ATP + H2O = L-glutaminyl-tRNA(Gln) + L-glutamate + ADP + phosphate + H(+). The catalysed reaction is L-aspartyl-tRNA(Asn) + L-glutamine + ATP + H2O = L-asparaginyl-tRNA(Asn) + L-glutamate + ADP + phosphate + 2 H(+). In terms of biological role, allows the formation of correctly charged Asn-tRNA(Asn) or Gln-tRNA(Gln) through the transamidation of misacylated Asp-tRNA(Asn) or Glu-tRNA(Gln) in organisms which lack either or both of asparaginyl-tRNA or glutaminyl-tRNA synthetases. The reaction takes place in the presence of glutamine and ATP through an activated phospho-Asp-tRNA(Asn) or phospho-Glu-tRNA(Gln). The polypeptide is Aspartyl/glutamyl-tRNA(Asn/Gln) amidotransferase subunit C (Staphylococcus haemolyticus (strain JCSC1435)).